The chain runs to 323 residues: Lipoyl synthase (323 aa).

Residues cysteine 65, cysteine 70, cysteine 76, cysteine 91, cysteine 95, cysteine 98, and serine 304 each contribute to the [4Fe-4S] cluster site. The Radical SAM core domain occupies 77–293; that stretch reads FNNGTATFMI…KKEALSIGFT (217 aa).

The protein belongs to the radical SAM superfamily. Lipoyl synthase family. [4Fe-4S] cluster is required as a cofactor.

Its subcellular location is the cytoplasm. It catalyses the reaction [[Fe-S] cluster scaffold protein carrying a second [4Fe-4S](2+) cluster] + N(6)-octanoyl-L-lysyl-[protein] + 2 oxidized [2Fe-2S]-[ferredoxin] + 2 S-adenosyl-L-methionine + 4 H(+) = [[Fe-S] cluster scaffold protein] + N(6)-[(R)-dihydrolipoyl]-L-lysyl-[protein] + 4 Fe(3+) + 2 hydrogen sulfide + 2 5'-deoxyadenosine + 2 L-methionine + 2 reduced [2Fe-2S]-[ferredoxin]. It participates in protein modification; protein lipoylation via endogenous pathway; protein N(6)-(lipoyl)lysine from octanoyl-[acyl-carrier-protein]: step 2/2. In terms of biological role, catalyzes the radical-mediated insertion of two sulfur atoms into the C-6 and C-8 positions of the octanoyl moiety bound to the lipoyl domains of lipoate-dependent enzymes, thereby converting the octanoylated domains into lipoylated derivatives. This Buchnera aphidicola subsp. Acyrthosiphon pisum (strain APS) (Acyrthosiphon pisum symbiotic bacterium) protein is Lipoyl synthase.